Consider the following 95-residue polypeptide: Nickel and cobalt resistance protein CnrY (95 aa).

At 1–45 (MADVEEWLTHARKVTQEASIGVDVTSIQECISAEPAQRVLVARRD) the chain is on the cytoplasmic side. The chain crosses the membrane as a helical span at residues 46–68 (AWRAICCAAFAALVAFAAINRVA). Over 69-95 (TIMLEKPAPTWVATPSAASPFGLLIGK) the chain is Periplasmic.

It to A.xylosoxydans NccY.

The protein resides in the cell inner membrane. In terms of biological role, nickel and cobalt resistance proteins CnrA, CnrB, CnrC CnrH and CnrR may be involved in the regulation of CNR. Functionally, cnrH alone is able to activate cnr expression, and both CnrY and CrnX are needed for nickel induction of CnrH. In the absence of wild-type CnrY (due either to a frameshift, PubMed:10671463 or absence of the transcript, PubMed:10671464), nickel and cobalt resistance is constitutive, indicating that CrnY may act as a repressor or an anti-sigma factor. This is Nickel and cobalt resistance protein CnrY (cnrY) from Cupriavidus metallidurans (strain ATCC 43123 / DSM 2839 / NBRC 102507 / CH34) (Ralstonia metallidurans).